The primary structure comprises 140 residues: Large ribosomal subunit protein uL11 (140 aa).

The protein belongs to the universal ribosomal protein uL11 family. Part of the ribosomal stalk of the 50S ribosomal subunit. Interacts with L10 and the large rRNA to form the base of the stalk. L10 forms an elongated spine to which L12 dimers bind in a sequential fashion forming a multimeric L10(L12)X complex. In terms of processing, one or more lysine residues are methylated.

In terms of biological role, forms part of the ribosomal stalk which helps the ribosome interact with GTP-bound translation factors. This is Large ribosomal subunit protein uL11 from Desulfatibacillum aliphaticivorans.